A 607-amino-acid polypeptide reads, in one-letter code: Pyruvate decarboxylase 1 (607 aa).

Residues aspartate 69 and histidine 156 each contribute to the substrate site. The interval 434-516 (DSWFNCQKLK…FLINNGGYTI (83 aa)) is thiamine pyrophosphate binding. Mg(2+) is bound by residues aspartate 484, asparagine 511, and glycine 513. A substrate-binding site is contributed by glutamate 517.

This sequence belongs to the TPP enzyme family. As to quaternary structure, homotetramer. It depends on a metal cation as a cofactor. The cofactor is thiamine diphosphate. As to expression, highly expressed in seeds, and at lower levels in roots and siliques.

It catalyses the reaction a 2-oxocarboxylate + H(+) = an aldehyde + CO2. Its function is as follows. May play a role in ethanolic fermentation during anoxia. This is Pyruvate decarboxylase 1 (PDC1) from Arabidopsis thaliana (Mouse-ear cress).